Here is a 524-residue protein sequence, read N- to C-terminus: Keratin, type II cytoskeletal 71 (524 aa).

Residues 1–130 (MSRQFTCKSG…DPEIQKVRAQ (130 aa)) are head. The tract at residues 131–166 (EREQIKALNNKFASFIDKVRFLEQQNQVLQTKWELL) is coil 1A. The IF rod domain occupies 131–444 (EREQIKALNN…KLLESEECRM (314 aa)). The linker 1 stretch occupies residues 167-185 (QQLDLNNCKNNLEPILEGH). Positions 186-277 (ISNMRKQLET…CLFEAEMAQI (92 aa)) are coil 1B. Residues 278–301 (QSHISDMSVILSMDNNRNLDLDSI) form a linker 12 region. The coil 2 stretch occupies residues 302–440 (IDEVRAQYEE…ATYRKLLESE (139 aa)). Residues 441–524 (ECRMSGEYSS…LSTPSKKGGR (84 aa)) are tail. Residues 493 to 524 (GGENRSRGSASDYKDTLTKGSSLSTPSKKGGR) form a disordered region. Basic and acidic residues predominate over residues 494–509 (GENRSRGSASDYKDTL). The span at 510–524 (TKGSSLSTPSKKGGR) shows a compositional bias: polar residues.

The protein belongs to the intermediate filament family. Heterodimer of a type I and a type II keratin. Associates with KRT16 and/or KRT17. Specifically expressed in the inner root sheath (IRS) of the hair follicle. Present in Henle and the Huxley layers of the IRS, while expression in the cuticle is unsure (at protein level).

The protein resides in the cytoplasm. Its subcellular location is the cytoskeleton. In terms of biological role, plays a central role in hair formation. Essential component of keratin intermediate filaments in the inner root sheath (IRS) of the hair follicle. The polypeptide is Keratin, type II cytoskeletal 71 (Krt71) (Mus musculus (Mouse)).